The following is a 146-amino-acid chain: Peptide methionine sulfoxide reductase MsrB (146 aa).

One can recognise a MsrB domain in the interval 2–125; it reads LKKNKDELND…NSAAVQFIPY (124 aa). The active-site Nucleophile is the C114.

Belongs to the MsrB Met sulfoxide reductase family.

It carries out the reaction L-methionyl-[protein] + [thioredoxin]-disulfide + H2O = L-methionyl-(R)-S-oxide-[protein] + [thioredoxin]-dithiol. The sequence is that of Peptide methionine sulfoxide reductase MsrB from Staphylococcus carnosus (strain TM300).